The sequence spans 204 residues: Large ribosomal subunit protein eL15 (204 aa).

This sequence belongs to the eukaryotic ribosomal protein eL15 family. In terms of assembly, component of the large ribosomal subunit.

It is found in the cytoplasm. Component of the large ribosomal subunit. The ribosome is a large ribonucleoprotein complex responsible for the synthesis of proteins in the cell. This chain is Large ribosomal subunit protein eL15 (rpl15), found in Tachysurus fulvidraco (Yellow catfish).